The following is a 488-amino-acid chain: N-succinylglutamate 5-semialdehyde dehydrogenase (488 aa).

221–226 (GSSRTG) lines the NAD(+) pocket. Active-site residues include Glu244 and Cys278.

This sequence belongs to the aldehyde dehydrogenase family. AstD subfamily.

It catalyses the reaction N-succinyl-L-glutamate 5-semialdehyde + NAD(+) + H2O = N-succinyl-L-glutamate + NADH + 2 H(+). Its pathway is amino-acid degradation; L-arginine degradation via AST pathway; L-glutamate and succinate from L-arginine: step 4/5. Its function is as follows. Catalyzes the NAD-dependent reduction of succinylglutamate semialdehyde into succinylglutamate. This Pseudomonas fluorescens (strain ATCC BAA-477 / NRRL B-23932 / Pf-5) protein is N-succinylglutamate 5-semialdehyde dehydrogenase.